The following is a 105-amino-acid chain: Iron-sulfur cluster assembly protein CyaY (105 aa).

The protein belongs to the frataxin family.

Involved in iron-sulfur (Fe-S) cluster assembly. May act as a regulator of Fe-S biogenesis. This is Iron-sulfur cluster assembly protein CyaY from Psychromonas ingrahamii (strain DSM 17664 / CCUG 51855 / 37).